Reading from the N-terminus, the 472-residue chain is MNVGHIVSVIGVVVDVEFAPGQVPDIYSAVKIRTEDQEDKSTKWNLTLEVAQHLGNNRVRCIAMSSTEGLKRGMKVVSTGKAISVPVGRPVLGRLLNVLGEEADGLEPIKAEKYYPIHRPAPALVDQSTKAEMLETGIKVIDLMIPFLKGGKIGLFGGAGVGKTVIVMELINNIAKQHGGISVFAGVGERTREGNDLYHEMKEAGVLEKTIMVFGQMNEPPGARLRVGLTGLTMAEFFRDEEGADTLLFIDNIFRFTQAGSEVSALLGRMPSAVGYQPTLATEMGQLQERITSTRKGSVTSVQAIYVPADDLTDPAPANAFAHLDATVVLSRAISELGIYPAVDPLDSTSRILDPQVVGKEHYECARGVQSVLQRYKELQDIIAILGMDELSDEDKLTVARARKLQRFLSQPFHVAETFTGRPGKYVSLKDTIRSFNEILAGKHDALPEQAFYMAGAIEEVMENAKRIEAGA.

157-164 (GGAGVGKT) lines the ATP pocket.

It belongs to the ATPase alpha/beta chains family. F-type ATPases have 2 components, CF(1) - the catalytic core - and CF(0) - the membrane proton channel. CF(1) has five subunits: alpha(3), beta(3), gamma(1), delta(1), epsilon(1). CF(0) has three main subunits: a(1), b(2) and c(9-12). The alpha and beta chains form an alternating ring which encloses part of the gamma chain. CF(1) is attached to CF(0) by a central stalk formed by the gamma and epsilon chains, while a peripheral stalk is formed by the delta and b chains.

Its subcellular location is the cell membrane. It carries out the reaction ATP + H2O + 4 H(+)(in) = ADP + phosphate + 5 H(+)(out). Its function is as follows. Produces ATP from ADP in the presence of a proton gradient across the membrane. The catalytic sites are hosted primarily by the beta subunits. The polypeptide is ATP synthase subunit beta (Desulforamulus reducens (strain ATCC BAA-1160 / DSM 100696 / MI-1) (Desulfotomaculum reducens)).